The chain runs to 432 residues: Adenylosuccinate synthetase (432 aa).

GTP is bound by residues 13–19 and 41–43; these read GDEGKGK and GHT. Catalysis depends on Asp-14, which acts as the Proton acceptor. 2 residues coordinate Mg(2+): Asp-14 and Gly-41. Residues 14–17, 39–42, Thr-131, Arg-145, Gln-226, Thr-241, and Arg-305 contribute to the IMP site; these read DEGK and NAGH. Catalysis depends on His-42, which acts as the Proton donor. 301–307 is a binding site for substrate; the sequence is SVTGRAR. Residues Arg-307, 333 to 335, and 416 to 418 contribute to the GTP site; these read KLD and STG.

It belongs to the adenylosuccinate synthetase family. In terms of assembly, homodimer. Requires Mg(2+) as cofactor.

It is found in the cytoplasm. It carries out the reaction IMP + L-aspartate + GTP = N(6)-(1,2-dicarboxyethyl)-AMP + GDP + phosphate + 2 H(+). It participates in purine metabolism; AMP biosynthesis via de novo pathway; AMP from IMP: step 1/2. Its function is as follows. Plays an important role in the de novo pathway of purine nucleotide biosynthesis. Catalyzes the first committed step in the biosynthesis of AMP from IMP. The chain is Adenylosuccinate synthetase from Neisseria meningitidis serogroup B (strain ATCC BAA-335 / MC58).